We begin with the raw amino-acid sequence, 134 residues long: Large ribosomal subunit protein mL41 (134 aa).

Residues 1 to 13 (MGFLTAVTQGLVR) constitute a mitochondrion transit peptide.

The protein belongs to the mitochondrion-specific ribosomal protein mL41 family. Component of the mitochondrial ribosome large subunit (39S) which comprises a 16S rRNA and about 50 distinct proteins. Interacts with BCL2. Was also identified in the 28S mitochondrial ribosome.

The protein localises to the mitochondrion. Component of the mitochondrial ribosome large subunit. Also involved in apoptosis and cell cycle. Enhances p53/TP53 stability, thereby contributing to p53/TP53-induced apoptosis in response to growth-inhibitory condition. Enhances p53/TP53 translocation to the mitochondria. Has the ability to arrest the cell cycle at the G1 phase, possibly by stabilizing the CDKN1A and CDKN1B (p27Kip1) proteins. This Rattus norvegicus (Rat) protein is Large ribosomal subunit protein mL41 (Mrpl41).